A 521-amino-acid polypeptide reads, in one-letter code: Glucose-6-phosphate isomerase (521 aa).

The active-site Proton donor is E351. Active-site residues include H382 and K491.

It belongs to the GPI family.

The protein resides in the cytoplasm. It carries out the reaction alpha-D-glucose 6-phosphate = beta-D-fructose 6-phosphate. The protein operates within carbohydrate biosynthesis; gluconeogenesis. Its pathway is carbohydrate degradation; glycolysis; D-glyceraldehyde 3-phosphate and glycerone phosphate from D-glucose: step 2/4. Catalyzes the reversible isomerization of glucose-6-phosphate to fructose-6-phosphate. The protein is Glucose-6-phosphate isomerase of Polaromonas naphthalenivorans (strain CJ2).